The primary structure comprises 387 residues: Proline-rich protein 5 (387 aa).

2 interaction with RICTOR regions span residues methionine 10–glycine 96 and histidine 189–tyrosine 219. Positions serine 11 to threonine 33 are disordered. Basic and acidic residues predominate over residues leucine 18–threonine 33. Serine 253 carries the post-translational modification Phosphoserine. Disordered stretches follow at residues asparagine 262–leucine 347 and aspartate 365–valine 387. Low complexity predominate over residues serine 310–serine 321. At serine 373 the chain carries Phosphoserine.

This sequence belongs to the PROTOR family. As to quaternary structure, associated component of the mechanistic target of rapamycin complex 2 (mTORC2). Binds directly to MTOR and RICTOR within the TORC2 complex.

In terms of biological role, associated subunit of mTORC2, which regulates cell growth and survival in response to hormonal signals. mTORC2 is activated by growth factors, but, in contrast to mTORC1, seems to be nutrient-insensitive. mTORC2 seems to function upstream of Rho GTPases to regulate the actin cytoskeleton, probably by activating one or more Rho-type guanine nucleotide exchange factors. PRR5 plays an important role in regulation of PDGFRB expression and in modulation of platelet-derived growth factor signaling. May act as a tumor suppressor in breast cancer. The chain is Proline-rich protein 5 from Rattus norvegicus (Rat).